We begin with the raw amino-acid sequence, 627 residues long: tRNA uridine 5-carboxymethylaminomethyl modification enzyme MnmG (627 aa).

Residues 16 to 21 (GAGHAG), V128, and S183 contribute to the FAD site. 277 to 291 (GPRYCPSIEDKIVRF) lines the NAD(+) pocket. Q374 serves as a coordination point for FAD.

Belongs to the MnmG family. Homodimer. Heterotetramer of two MnmE and two MnmG subunits. Requires FAD as cofactor.

The protein localises to the cytoplasm. NAD-binding protein involved in the addition of a carboxymethylaminomethyl (cmnm) group at the wobble position (U34) of certain tRNAs, forming tRNA-cmnm(5)s(2)U34. The polypeptide is tRNA uridine 5-carboxymethylaminomethyl modification enzyme MnmG (Finegoldia magna (strain ATCC 29328 / DSM 20472 / WAL 2508) (Peptostreptococcus magnus)).